An 890-amino-acid chain; its full sequence is Phosphotransferase RcsD (890 aa).

The Cytoplasmic portion of the chain corresponds to 1–21; sequence MRQKETTATTRFSLLPGSITR. The chain crosses the membrane as a helical span at residues 22–42; it reads FFLLLIIVLLVTMGVMVQSAV. Residues 43 to 308 are Periplasmic-facing; it reads NAWLKDKSYQ…GTLLLDTLQN (266 aa). Residues 309 to 329 traverse the membrane as a helical segment; the sequence is ILLPLLLNIGLLALALFGYTT. The Cytoplasmic portion of the chain corresponds to 330–890; sequence FRHFSSRSTE…DIDSYVKSLL (561 aa). The interval 468-678 is histidine-like kinase; it reads NIGDALKEPA…RYSVHIKMLA (211 aa). The HPt domain maps to 803-890; the sequence is AQLHASGYYA…DIDSYVKSLL (88 aa). His-842 is subject to Phosphohistidine.

Belongs to the RcsD family. As to quaternary structure, interacts with RcsC and RcsB. Has a higher affinity for RcsB than for RcsC. Phosphorylated by RcsC.

It localises to the cell inner membrane. Its function is as follows. Component of the Rcs signaling system, which controls transcription of numerous genes. RcsD is a phosphotransfer intermediate between the sensor kinase RcsC and the response regulator RcsB. It acquires a phosphoryl group from RcsC and transfers it to RcsB. The system controls expression of genes involved in colanic acid capsule synthesis, biofilm formation and cell division. This is Phosphotransferase RcsD from Escherichia coli (strain K12).